Consider the following 426-residue polypeptide: Enolase (426 aa).

Gln-162 serves as a coordination point for (2R)-2-phosphoglycerate. Glu-204 serves as the catalytic Proton donor. Residues Asp-241, Glu-284, and Asp-311 each coordinate Mg(2+). (2R)-2-phosphoglycerate-binding residues include Lys-336, Arg-365, Ser-366, and Lys-387. Lys-336 (proton acceptor) is an active-site residue.

This sequence belongs to the enolase family. As to quaternary structure, component of the RNA degradosome, a multiprotein complex involved in RNA processing and mRNA degradation. It depends on Mg(2+) as a cofactor.

It localises to the cytoplasm. The protein localises to the secreted. The protein resides in the cell surface. It carries out the reaction (2R)-2-phosphoglycerate = phosphoenolpyruvate + H2O. It participates in carbohydrate degradation; glycolysis; pyruvate from D-glyceraldehyde 3-phosphate: step 4/5. Functionally, catalyzes the reversible conversion of 2-phosphoglycerate (2-PG) into phosphoenolpyruvate (PEP). It is essential for the degradation of carbohydrates via glycolysis. This Hydrogenovibrio crunogenus (strain DSM 25203 / XCL-2) (Thiomicrospira crunogena) protein is Enolase.